A 209-amino-acid polypeptide reads, in one-letter code: Ephrin-A2 (209 aa).

An N-terminal signal peptide occupies residues 1–20 (MAPAQRPLLPLLLLLLPLRA). In terms of domain architecture, Ephrin RBD spans 30–170 (ADRYAVYWNR…RLKVYVRPTN (141 aa)). An N-linked (GlcNAc...) asparagine glycan is attached at Asn38. 2 disulfides stabilise this stretch: Cys69–Cys110 and Cys98–Cys159. N-linked (GlcNAc...) asparagine glycans are attached at residues Asn170 and Asn184. Asn184 carries the GPI-anchor amidated asparagine lipid modification. The propeptide at 185–209 (SSCSGLGGCHLFLTTVPVLWSLLGS) is removed in mature form.

Belongs to the ephrin family. In terms of assembly, binds to the receptor tyrosine kinases EPHA3, EPHA4 and EPHA5. Interacts with EPHA8; activates EPHA8. As to expression, expressed in myogenic progenitor cells.

The protein resides in the cell membrane. In terms of biological role, cell surface GPI-bound ligand for Eph receptors, a family of receptor tyrosine kinases which are crucial for migration, repulsion and adhesion during neuronal, vascular and epithelial development. Binds promiscuously Eph receptors residing on adjacent cells, leading to contact-dependent bidirectional signaling into neighboring cells. The signaling pathway downstream of the receptor is referred to as forward signaling while the signaling pathway downstream of the ephrin ligand is referred to as reverse signaling. With the EPHA2 receptor may play a role in bone remodeling through regulation of osteoclastogenesis and osteoblastogenesis. The polypeptide is Ephrin-A2 (Efna2) (Mus musculus (Mouse)).